The following is a 685-amino-acid chain: Coiled-coil domain-containing protein 8 homolog (685 aa).

The tract at residues 93–127 (VGTYDSSNGSDSELSDFDTSKVKGNRSSSGRTRKV) is disordered. S142 and S146 each carry phosphoserine. Disordered regions lie at residues 207–263 (QRVK…GTRR), 281–538 (VPPF…KAEA), 558–579 (QRAEAIDSQRAEGPANQRTGAT), and 599–623 (REEAGPQGIQEASAGSGSRAQKQVK). Positions 219–228 (EVGQTQQAST) are enriched in polar residues. The span at 246-256 (DSSRNTGDRSD) shows a compositional bias: basic and acidic residues. Composition is skewed to low complexity over residues 299–329 (AENQGAEAAANQRAEPLASPRAEAAASPRAE), 337–353 (EAVASPRAEAAASPRAE), 361–401 (EAAA…PRAE), and 409–420 (EAAASPIAEAAA). Residues 425–440 (ELVDSPRAETAADPRA) are compositionally biased toward basic and acidic residues. Over residues 458–468 (AAASPIAEAAA) the composition is skewed to low complexity. Positions 473-488 (ELVDSPRAETAADPRA) are enriched in basic and acidic residues. Residues 505 to 519 (EVAASPRAEAAASPR) are compositionally biased toward low complexity. Positions 558–567 (QRAEAIDSQR) are enriched in basic and acidic residues. A compositionally biased stretch (polar residues) spans 611–622 (SAGSGSRAQKQV). Residues 647–653 (PRLPTLP) carry the PxLPxI/L motif; mediates interaction with ANKRA2 motif.

As to quaternary structure, component of the 3M complex, composed of core components CUL7, CCDC8 and OBSL1. Interacts (via PxLPxI/L motif) with ANKRA2 (via ankyrin repeats); may link the 3M complex to histone deacetylases including HDAC4 and HDAC5.

The protein resides in the cytoplasm. The protein localises to the cytoskeleton. It localises to the microtubule organizing center. It is found in the centrosome. Functionally, core component of the 3M complex, a complex required to regulate microtubule dynamics and genome integrity. It is unclear how the 3M complex regulates microtubules, it could act by controlling the level of a microtubule stabilizer. Required for localization of CUL7 to the centrosome. In Mus musculus (Mouse), this protein is Coiled-coil domain-containing protein 8 homolog (Ccdc8).